The chain runs to 299 residues: NmrA-like family domain-containing protein 1 (299 aa).

Residues 11-16, 37-41, 58-59, glutamine 62, 79-81, lysine 92, lysine 133, and 155-158 each bind NADP(+); these read GGTGAQ, RNPRK, DQ, TNY, and YFEN. The interaction with ASS1 stretch occupies residues 153–189; the sequence is PCYFENLLSHFLPQKAPDGKSYLLSLPTGDVPMDGMS.

This sequence belongs to the NmrA-type oxidoreductase family. Homodimer. Interacts with ASS1. Interaction is enhanced by low NADPH/NADP(+) ratios, which results in inhibition of ASS1 activity.

Its subcellular location is the cytoplasm. It is found in the perinuclear region. It localises to the nucleus. Functionally, redox sensor protein. Undergoes restructuring and subcellular redistribution in response to changes in intracellular NADPH/NADP(+) levels. At low NADPH concentrations the protein is found mainly as a monomer, and binds argininosuccinate synthase (ASS1), the enzyme involved in nitric oxide synthesis. Association with ASS1 impairs its activity and reduces the production of nitric oxide, which subsecuently prevents apoptosis. Under normal NADPH concentrations, the protein is found as a dimer and hides the binding site for ASS1. The homodimer binds one molecule of NADPH. Has higher affinity for NADPH than for NADP(+). Binding to NADPH is necessary to form a stable dimer. The sequence is that of NmrA-like family domain-containing protein 1 (NMRAL1) from Homo sapiens (Human).